Consider the following 372-residue polypeptide: Beta-1,4-galactosyltransferase 2 (372 aa).

Residues 1–15 are Cytoplasmic-facing; that stretch reads MSRLLGGTLERVCKA. The helical; Signal-anchor for type II membrane protein transmembrane segment at 16–36 threads the bilayer; the sequence is VLLLCLLHFLVAVILYFDVYA. The Lumenal segment spans residues 37–372; that stretch reads QHLAFFSRFS…GRPPSWPPRG (336 aa). Positions 56–97 are disordered; sequence PAASSSSSSSNCSRPNATASSSGLPEVPSALPGPTAPTLPPC. Residues N66 and N71 are each glycosylated (N-linked (GlcNAc...) asparagine). The segment covering 66 to 78 has biased composition (polar residues); that stretch reads NCSRPNATASSSG. C97 and C139 are joined by a disulfide. Residues 150–154, 189–191, 217–218, and W278 contribute to the UDP-alpha-D-galactose site; these read PFRHR, FNR, and VD. The cysteines at positions 211 and 230 are disulfide-linked. Residue D218 coordinates Mn(2+). 280–283 is a binding site for N-acetyl-D-glucosamine; that stretch reads GEDD. H311 is a binding site for Mn(2+). 311–313 lines the UDP-alpha-D-galactose pocket; that stretch reads HDR. R323 provides a ligand contact to N-acetyl-D-glucosamine. N-linked (GlcNAc...) asparagine glycosylation occurs at N357.

This sequence belongs to the glycosyltransferase 7 family. It depends on Mn(2+) as a cofactor. Weakly expressed in various tissues. Highest expression in prostate, testis, ovary, intestine, muscle, and in fetal brain.

It localises to the golgi apparatus. Its subcellular location is the golgi stack membrane. The enzyme catalyses D-glucose + UDP-alpha-D-galactose = lactose + UDP + H(+). It carries out the reaction an N-acetyl-beta-D-glucosaminyl derivative + UDP-alpha-D-galactose = a beta-D-galactosyl-(1-&gt;4)-N-acetyl-beta-D-glucosaminyl derivative + UDP + H(+). The catalysed reaction is N-acetyl-D-glucosamine + UDP-alpha-D-galactose = beta-D-galactosyl-(1-&gt;4)-N-acetyl-D-glucosamine + UDP + H(+). Its pathway is protein modification; protein glycosylation. Responsible for the synthesis of complex-type N-linked oligosaccharides in many glycoproteins as well as the carbohydrate moieties of glycolipids. Can produce lactose. This is Beta-1,4-galactosyltransferase 2 from Homo sapiens (Human).